A 377-amino-acid chain; its full sequence is Beta-lactamase (377 aa).

A signal peptide spans 1-19 (MFKTTLCALLITASCSTFA). S80 (acyl-ester intermediate) is an active-site residue. Positions 80, 136, 166, 168, 334, and 359 each coordinate a beta-lactam.

Belongs to the class-C beta-lactamase family. Monomer.

The protein resides in the periplasm. It carries out the reaction a beta-lactam + H2O = a substituted beta-amino acid. With respect to regulation, inhibited by the beta-lactamase-blocking agents avibactam, enmetazobactam, relebactam, nacubactam, vaborbactam, taniborbactam, zidebactam, and beta-lactam-analog boronic acids, via a covalent binding to Ser-80. Inhibited by non-beta-lactam, benzo(b)thiophene-2-boronic acid (BZBTH2B) and various cyclic boronates. Not inhibited by clavulanic acid. Inhibited by O-aryloxycarbonyl hydroxamates, via cross-linking of the active site Ser-80 to Lys-331. Weakly inhibited by citric acid. Its function is as follows. Class C beta-lactamase which confers resistance to penicillins and cephalosporins. Has benzylpenicillin- and cephaloridine-hydrolyzing activity. Has weak cefuroxime, cefotaxime, cefoxitin and oxacillin-hydrolyzing activities. This chain is Beta-lactamase, found in Escherichia coli (strain K12).